A 296-amino-acid chain; its full sequence is Formamidopyrimidine-DNA glycosylase (296 aa).

The active-site Schiff-base intermediate with DNA is proline 2. Glutamate 3 acts as the Proton donor in catalysis. Lysine 58 (proton donor; for beta-elimination activity) is an active-site residue. DNA-binding residues include histidine 104, arginine 126, and lysine 169. An FPG-type zinc finger spans residues 260 to 296; it reads SVYDREGQACGTPGCGGTVARIVQAGRSTFYCAACQK. The Proton donor; for delta-elimination activity role is filled by arginine 286.

This sequence belongs to the FPG family. As to quaternary structure, monomer. The cofactor is Zn(2+).

The enzyme catalyses Hydrolysis of DNA containing ring-opened 7-methylguanine residues, releasing 2,6-diamino-4-hydroxy-5-(N-methyl)formamidopyrimidine.. It catalyses the reaction 2'-deoxyribonucleotide-(2'-deoxyribose 5'-phosphate)-2'-deoxyribonucleotide-DNA = a 3'-end 2'-deoxyribonucleotide-(2,3-dehydro-2,3-deoxyribose 5'-phosphate)-DNA + a 5'-end 5'-phospho-2'-deoxyribonucleoside-DNA + H(+). Involved in base excision repair of DNA damaged by oxidation or by mutagenic agents. Acts as a DNA glycosylase that recognizes and removes damaged bases. Has a preference for oxidized purines, such as 7,8-dihydro-8-oxoguanine (8-oxoG). Has AP (apurinic/apyrimidinic) lyase activity and introduces nicks in the DNA strand. Cleaves the DNA backbone by beta-delta elimination to generate a single-strand break at the site of the removed base with both 3'- and 5'-phosphates. This chain is Formamidopyrimidine-DNA glycosylase, found in Rhizobium etli (strain CIAT 652).